The primary structure comprises 396 residues: Cyclic GMP-AMP synthase-like receptor (396 aa).

ATP contacts are provided by residues Ser-63 and 75–77 (EFD). Glu-75, Asp-77, and Asp-194 together coordinate Mg(2+). Asp-194 lines the GTP pocket. ATP-binding positions include 241–244 (QEQE), Lys-262, and 275–279 (SYYLK). 3 residues coordinate Mn(2+): Val-286, Glu-287, and Asp-292. The interval 376–396 (IMNGGNPQQSANAENGSCLSM) is disordered. Residues 380–396 (GNPQQSANAENGSCLSM) are compositionally biased toward polar residues.

It belongs to the mab-21 family. It depends on Mg(2+) as a cofactor. Mn(2+) is required as a cofactor.

The enzyme catalyses GTP + ATP = 2',3'-cGAMP + 2 diphosphate. It carries out the reaction GTP + ATP = pppGp(2'-5')A + diphosphate. It catalyses the reaction pppGp(2'-5')A = 2',3'-cGAMP + diphosphate. Functionally, nucleotidyltransferase that catalyzes the formation of cyclic GMP-AMP (2',3'-cGAMP) from ATP and GTP and plays a key role in innate immunity. Acts as a key sensor of double-stranded RNA (dsRNA), the presence of dsRNA in the cytoplasm being a danger signal that triggers the immune responses. Directly binds dsRNA, activating the nucleotidyltransferase activity, leading to synthesis of 2',3'-cGAMP, a second messenger that binds to and activates Sting, thereby triggering the immune response via activation of the NF-kappa-B transcription factor. The protein is Cyclic GMP-AMP synthase-like receptor of Aethina tumida (Small hive beetle).